We begin with the raw amino-acid sequence, 224 residues long: UPF0758 protein AFE_0358 (224 aa).

The MPN domain maps to 102–224; that stretch reads GLDSPLRVRQ…PLSLREQGGW (123 aa). Zn(2+) is bound by residues His-173, His-175, and Asp-186. The short motif at 173–186 is the JAMM motif element; sequence HNHPSGVAEPSAAD.

Belongs to the UPF0758 family.

The protein is UPF0758 protein AFE_0358 of Acidithiobacillus ferrooxidans (strain ATCC 23270 / DSM 14882 / CIP 104768 / NCIMB 8455) (Ferrobacillus ferrooxidans (strain ATCC 23270)).